We begin with the raw amino-acid sequence, 440 residues long: Diaminopimelate decarboxylase (440 aa).

The residue at position 61 (Lys-61) is an N6-(pyridoxal phosphate)lysine. Pyridoxal 5'-phosphate contacts are provided by residues Gly-234 and 275 to 278 (EPGR). 3 residues coordinate substrate: Arg-278, Arg-314, and Tyr-318. Cys-348 (proton donor) is an active-site residue. Substrate is bound by residues Glu-349 and Tyr-384. Tyr-384 contributes to the pyridoxal 5'-phosphate binding site. Over residues 421-431 (LAPELEPGPAL) the composition is skewed to low complexity. The segment at 421–440 (LAPELEPGPALSPRPSRDPR) is disordered.

Belongs to the Orn/Lys/Arg decarboxylase class-II family. LysA subfamily. In terms of assembly, homodimer. Pyridoxal 5'-phosphate serves as cofactor.

It catalyses the reaction meso-2,6-diaminopimelate + H(+) = L-lysine + CO2. It participates in amino-acid biosynthesis; L-lysine biosynthesis via DAP pathway; L-lysine from DL-2,6-diaminopimelate: step 1/1. In terms of biological role, specifically catalyzes the decarboxylation of meso-diaminopimelate (meso-DAP) to L-lysine. This Streptomyces coelicolor (strain ATCC BAA-471 / A3(2) / M145) protein is Diaminopimelate decarboxylase.